Here is a 527-residue protein sequence, read N- to C-terminus: Catalase (527 aa).

Residues 1 to 22 show a composition bias toward basic and acidic residues; sequence MADSRDPASDQMKHWKEERAAQ. Residues 1-32 form a disordered region; it reads MADSRDPASDQMKHWKEERAAQKPDVLTTAGG. A2 bears the N-acetylalanine mark. The residue at position 9 (S9) is a Phosphoserine. K13 is modified (N6-succinyllysine). Active-site residues include H75 and N148. The NADP(+) site is built by H194, S201, R203, and N213. K221 is subject to N6-succinyllysine. K233 carries the N6-acetyllysine modification. The NADP(+) site is built by K237, W303, H305, and K306. N6-acetyllysine; alternate is present on K306. The residue at position 306 (K306) is an N6-succinyllysine; alternate. Position 358 (Y358) interacts with heme. S434 carries the phosphoserine modification. At K480 the chain carries N6-acetyllysine; alternate. K480 bears the N6-succinyllysine; alternate mark. Residue K499 is modified to N6-acetyllysine. Position 511 is a phosphothreonine (T511). At S517 the chain carries Phosphoserine. Residue K522 is modified to N6-succinyllysine. The short motif at 524–527 is the Microbody targeting signal; atypical element; sequence KANL.

The protein belongs to the catalase family. In terms of assembly, homotetramer. Interacts (via microbody targeting signal) with PEX5, monomeric form interacts with PEX5, leading to its translocation into peroxisomes. Heme serves as cofactor. NADP(+) is required as a cofactor.

The protein resides in the peroxisome matrix. The catalysed reaction is 2 H2O2 = O2 + 2 H2O. In terms of biological role, catalyzes the degradation of hydrogen peroxide (H(2)O(2)) generated by peroxisomal oxidases to water and oxygen, thereby protecting cells from the toxic effects of hydrogen peroxide. Promotes growth of cells including T-cells, B-cells, myeloid leukemia cells, melanoma cells, mastocytoma cells and normal and transformed fibroblast cells. This chain is Catalase (CAT), found in Cavia porcellus (Guinea pig).